Here is a 364-residue protein sequence, read N- to C-terminus: Transposase for insertion sequence element IS1111A (364 aa).

It belongs to the transposase IS1111A/IS1328/IS1533 family.

Functionally, required for the transposition of the insertion element. The sequence is that of Transposase for insertion sequence element IS1111A from Coxiella burnetii (strain RSA 493 / Nine Mile phase I).